The chain runs to 201 residues: Small ribosomal subunit protein uS4 (201 aa).

The 61-residue stretch at 91 to 151 folds into the S4 RNA-binding domain; the sequence is SRLDNVVYRA…EKSQKMNWFE (61 aa).

It belongs to the universal ribosomal protein uS4 family. Part of the 30S ribosomal subunit. Contacts protein S5. The interaction surface between S4 and S5 is involved in control of translational fidelity.

One of the primary rRNA binding proteins, it binds directly to 16S rRNA where it nucleates assembly of the body of the 30S subunit. Its function is as follows. With S5 and S12 plays an important role in translational accuracy. This is Small ribosomal subunit protein uS4 from Corynebacterium glutamicum (strain R).